A 314-amino-acid chain; its full sequence is Cell division protein FtsQ (314 aa).

Composition is skewed to basic and acidic residues over residues Met-1–Asp-15 and Glu-30–Ala-57. Residues Met-1–Ala-57 form a disordered region. The Cytoplasmic segment spans residues Met-1–Lys-99. A helical transmembrane segment spans residues Ala-100 to Phe-120. Residues Thr-121–Lys-314 lie on the Extracellular side of the membrane. One can recognise a POTRA domain in the interval Met-124–Arg-192.

This sequence belongs to the FtsQ/DivIB family. FtsQ subfamily.

Its subcellular location is the cell membrane. Its function is as follows. Essential cell division protein. This is Cell division protein FtsQ from Mycobacterium bovis (strain ATCC BAA-935 / AF2122/97).